Here is a 209-residue protein sequence, read N- to C-terminus: Prolactin (209 aa).

Positions 1 to 24 are cleaved as a signal peptide; that stretch reads MAQRFKGRSLFLTALLCLASQGYA. Disulfide bonds link C70-C184 and C201-C209.

This sequence belongs to the somatotropin/prolactin family.

The protein localises to the secreted. This is Prolactin (prl) from Anguilla anguilla (European freshwater eel).